Consider the following 116-residue polypeptide: Protein Rev (116 aa).

2 positions are modified to phosphoserine; by host CK2: Ser-5 and Ser-8. The segment at 18–26 (LIKFLYQSN) is homomultimerization. The tract at residues 23–49 (YQSNPPPNPEGTRQARRNRRRRWRERQ) is disordered. The Nuclear localization signal and RNA-binding (RRE) signature appears at 34–50 (TRQARRNRRRRWRERQR). Positions 36–47 (QARRNRRRRWRE) are enriched in basic residues. The short motif at 73–84 (LQLPPLERLTLD) is the Nuclear export signal and binding to XPO1 element. Ser-92 and Ser-99 each carry phosphoserine; by host.

Belongs to the HIV-1 REV protein family. As to quaternary structure, homomultimer; when bound to the RRE. Multimeric assembly is essential for activity and may involve XPO1. Binds to human KPNB1, XPO1, TNPO1, RANBP5 and IPO7. Interacts with the viral Integrase. Interacts with human KHDRBS1. Interacts with human NAP1; this interaction decreases Rev multimerization and stimulates its activity. Interacts with human DEAD-box helicases DDX3 and DDX24; these interactions may serve for viral RNA export to the cytoplasm and packaging, respectively. Interacts with human PSIP1; this interaction may inhibit HIV-1 DNA integration by promoting dissociation of the Integrase-LEDGF/p75 complex. In terms of processing, asymmetrically arginine dimethylated at one site by host PRMT6. Methylation impairs the RNA-binding activity and export of viral RNA from the nucleus to the cytoplasm. Phosphorylated by protein kinase CK2. Presence of, and maybe binding to the N-terminus of the regulatory beta subunit of CK2 is necessary for CK2-mediated Rev's phosphorylation.

The protein resides in the host nucleus. It localises to the host nucleolus. Its subcellular location is the host cytoplasm. In terms of biological role, escorts unspliced or incompletely spliced viral pre-mRNAs (late transcripts) out of the nucleus of infected cells. These pre-mRNAs carry a recognition sequence called Rev responsive element (RRE) located in the env gene, that is not present in fully spliced viral mRNAs (early transcripts). This function is essential since most viral proteins are translated from unspliced or partially spliced pre-mRNAs which cannot exit the nucleus by the pathway used by fully processed cellular mRNAs. Rev itself is translated from a fully spliced mRNA that readily exits the nucleus. Rev's nuclear localization signal (NLS) binds directly to KPNB1/Importin beta-1 without previous binding to KPNA1/Importin alpha-1. KPNB1 binds to the GDP bound form of RAN (Ran-GDP) and targets Rev to the nucleus. In the nucleus, the conversion from Ran-GDP to Ran-GTP dissociates Rev from KPNB1 and allows Rev's binding to the RRE in viral pre-mRNAs. Rev multimerization on the RRE via cooperative assembly exposes its nuclear export signal (NES) to the surface. Rev can then form a complex with XPO1/CRM1 and Ran-GTP, leading to nuclear export of the complex. Conversion from Ran-GTP to Ran-GDP mediates dissociation of the Rev/RRE/XPO1/RAN complex, so that Rev can return to the nucleus for a subsequent round of export. Beside KPNB1, also seems to interact with TNPO1/Transportin-1, RANBP5/IPO5 and IPO7/RANBP7 for nuclear import. The nucleoporin-like HRB/RIP is an essential cofactor that probably indirectly interacts with Rev to release HIV RNAs from the perinuclear region to the cytoplasm. This Human immunodeficiency virus type 1 group M subtype B (isolate HXB3) (HIV-1) protein is Protein Rev.